The following is a 343-amino-acid chain: N-acetylornithine carbamoyltransferase (343 aa).

Carbamoyl phosphate-binding positions include 49 to 52, Trp-77, and Arg-112; that span reads SMRT. Position 144 (Glu-144) interacts with N(2)-acetyl-L-ornithine. 148–151 is a binding site for carbamoyl phosphate; the sequence is HPCQ. N(2)-acetyl-L-ornithine-binding residues include Lys-252 and Leu-295. Residue 294 to 295 participates in carbamoyl phosphate binding; that stretch reads CL. At Lys-302 the chain carries N6-carboxylysine. A carbamoyl phosphate-binding site is contributed by Arg-322.

It belongs to the aspartate/ornithine carbamoyltransferase superfamily. AOTCase family. Homotrimer.

It localises to the cytoplasm. It catalyses the reaction N(2)-acetyl-L-ornithine + carbamoyl phosphate = N(2)-acetyl-L-citrulline + phosphate + H(+). Its pathway is amino-acid biosynthesis; L-arginine biosynthesis. Its activity is regulated as follows. Carboxylation at Lys-302 increases the catalytic activity of the enzyme. Functionally, catalyzes the transfer of the carbamoyl group from carbamoyl phosphate to the delta-amino group of N(2)-acetyl-L-ornithine to produce N(2)-acetyl-L-citrulline. This is a step in an alternative arginine biosynthesis pathway. The enzyme has no activity with ornithine. This is N-acetylornithine carbamoyltransferase from Xanthomonas axonopodis pv. citri (strain 306).